Consider the following 279-residue polypeptide: 3-methyl-2-oxobutanoate hydroxymethyltransferase (279 aa).

2 residues coordinate Mg(2+): aspartate 44 and aspartate 83. 3-methyl-2-oxobutanoate is bound by residues 44 to 45 (DS), aspartate 83, and lysine 112. Position 114 (glutamate 114) interacts with Mg(2+). Glutamate 180 serves as the catalytic Proton acceptor.

It belongs to the PanB family. Homodecamer; pentamer of dimers. Mg(2+) serves as cofactor.

Its subcellular location is the cytoplasm. It catalyses the reaction 3-methyl-2-oxobutanoate + (6R)-5,10-methylene-5,6,7,8-tetrahydrofolate + H2O = 2-dehydropantoate + (6S)-5,6,7,8-tetrahydrofolate. It participates in cofactor biosynthesis; (R)-pantothenate biosynthesis; (R)-pantoate from 3-methyl-2-oxobutanoate: step 1/2. In terms of biological role, catalyzes the reversible reaction in which hydroxymethyl group from 5,10-methylenetetrahydrofolate is transferred onto alpha-ketoisovalerate to form ketopantoate. The chain is 3-methyl-2-oxobutanoate hydroxymethyltransferase from Chloroflexus aggregans (strain MD-66 / DSM 9485).